A 450-amino-acid polypeptide reads, in one-letter code: Bifunctional protein GlmU (450 aa).

Positions 1 to 229 (MRRHAIILAA…VEEIMGVNDR (229 aa)) are pyrophosphorylase. Residues 8 to 11 (LAAG), lysine 22, glutamine 72, and 77 to 78 (GT) each bind UDP-N-acetyl-alpha-D-glucosamine. Aspartate 102 is a Mg(2+) binding site. The UDP-N-acetyl-alpha-D-glucosamine site is built by glycine 139, glutamate 154, and asparagine 227. A Mg(2+)-binding site is contributed by asparagine 227. Residues 230–250 (VMLSQAEKAMQRRTNHYHMLN) form a linker region. Positions 251–450 (GVTIIDPDST…RQTTKEGYRK (200 aa)) are N-acetyltransferase. Residues arginine 332 and lysine 350 each contribute to the UDP-N-acetyl-alpha-D-glucosamine site. Residue histidine 362 is the Proton acceptor of the active site. Residues tyrosine 365 and asparagine 376 each coordinate UDP-N-acetyl-alpha-D-glucosamine. Residues 385 to 386 (NY), alanine 422, and arginine 439 contribute to the acetyl-CoA site.

It in the N-terminal section; belongs to the N-acetylglucosamine-1-phosphate uridyltransferase family. The protein in the C-terminal section; belongs to the transferase hexapeptide repeat family. As to quaternary structure, homotrimer. It depends on Mg(2+) as a cofactor.

Its subcellular location is the cytoplasm. It carries out the reaction alpha-D-glucosamine 1-phosphate + acetyl-CoA = N-acetyl-alpha-D-glucosamine 1-phosphate + CoA + H(+). It catalyses the reaction N-acetyl-alpha-D-glucosamine 1-phosphate + UTP + H(+) = UDP-N-acetyl-alpha-D-glucosamine + diphosphate. It participates in nucleotide-sugar biosynthesis; UDP-N-acetyl-alpha-D-glucosamine biosynthesis; N-acetyl-alpha-D-glucosamine 1-phosphate from alpha-D-glucosamine 6-phosphate (route II): step 2/2. Its pathway is nucleotide-sugar biosynthesis; UDP-N-acetyl-alpha-D-glucosamine biosynthesis; UDP-N-acetyl-alpha-D-glucosamine from N-acetyl-alpha-D-glucosamine 1-phosphate: step 1/1. The protein operates within bacterial outer membrane biogenesis; LPS lipid A biosynthesis. Catalyzes the last two sequential reactions in the de novo biosynthetic pathway for UDP-N-acetylglucosamine (UDP-GlcNAc). The C-terminal domain catalyzes the transfer of acetyl group from acetyl coenzyme A to glucosamine-1-phosphate (GlcN-1-P) to produce N-acetylglucosamine-1-phosphate (GlcNAc-1-P), which is converted into UDP-GlcNAc by the transfer of uridine 5-monophosphate (from uridine 5-triphosphate), a reaction catalyzed by the N-terminal domain. This is Bifunctional protein GlmU from Staphylococcus aureus (strain NCTC 8325 / PS 47).